The following is a 299-amino-acid chain: Bifunctional protein FolD (299 aa).

NADP(+) contacts are provided by residues 168–170 (GRS), Ser-193, and Ile-234.

This sequence belongs to the tetrahydrofolate dehydrogenase/cyclohydrolase family. Homodimer.

The catalysed reaction is (6R)-5,10-methylene-5,6,7,8-tetrahydrofolate + NADP(+) = (6R)-5,10-methenyltetrahydrofolate + NADPH. It catalyses the reaction (6R)-5,10-methenyltetrahydrofolate + H2O = (6R)-10-formyltetrahydrofolate + H(+). It participates in one-carbon metabolism; tetrahydrofolate interconversion. Its function is as follows. Catalyzes the oxidation of 5,10-methylenetetrahydrofolate to 5,10-methenyltetrahydrofolate and then the hydrolysis of 5,10-methenyltetrahydrofolate to 10-formyltetrahydrofolate. This Bartonella quintana (strain Toulouse) (Rochalimaea quintana) protein is Bifunctional protein FolD.